A 512-amino-acid polypeptide reads, in one-letter code: MRRFNLILLASLQLVGARSPGGFNIHEDLLTYPQFEVVFDNQYISEKDAHSLLDSQHPTYSADFAQSTLGQAREADARDNEAENKDQDGPSYKYELMKMPPNEYLCSIPILQSPEAENKTANELAKAEEARELTRATASGWELLSELQDSCLYFMSGWWSYSFCNNREIVQFHALPSIPNGQPPKRDPHTMEFTLGRVPAVPASAAHQAKMNGQEAPPPAELQVKGDQRYLVQRLEGGTICDLTGRERTIEVQYHCVPGMKADRIGWIKEVTICAYLMVVNTPRLCNDVAFLPPEETRANPITCKLILDKLNEPPSLDQTVPLAQDEAQVPLKQEDTGAKSGDAAPRDVGKEPINIGGVLVGARNVLSGADEAGKPPAKLPPPRSYFSNSNTDTERFLKVVASGKSKEDGGEMEVLGNEELEKLDLKPSVVKDMTERMRKLAGKYGWKLELVELPGGEKELRGYIDADEEELAKNKAKLKKEKEAAAKAKGDDEEEVVEGSEEQFFDKKDEL.

The N-terminal stretch at 1-17 (MRRFNLILLASLQLVGA) is a signal peptide. The segment at 71–91 (QAREADARDNEAENKDQDGPS) is disordered. The span at 73–88 (READARDNEAENKDQD) shows a compositional bias: basic and acidic residues. A glycan (N-linked (GlcNAc...) asparagine) is linked at asparagine 118. An MRH domain is found at 149-288 (DSCLYFMSGW…VVNTPRLCND (140 aa)). Cysteine 151 and cysteine 164 are joined by a disulfide. A mannooligosaccharide derivative-binding residues include tryptophan 158, tryptophan 159, glutamine 171, aspartate 242, arginine 248, glutamate 270, and tyrosine 276. 2 disulfides stabilise this stretch: cysteine 241/cysteine 274 and cysteine 256/cysteine 286. Disordered stretches follow at residues 329–349 (QVPLKQEDTGAKSGDAAPRDV) and 485–512 (AAAKAKGDDEEEVVEGSEEQFFDKKDEL). Residues 492–504 (DDEEEVVEGSEEQ) are compositionally biased toward acidic residues. A Prevents secretion from ER motif is present at residues 509-512 (KDEL).

Belongs to the OS-9 family. Interacts with missfolded ER lumenal proteins.

The protein localises to the endoplasmic reticulum membrane. Its function is as follows. Lectin involved in the quality control of the secretory pathway. As a member of the endoplasmic reticulum-associated degradation lumenal (ERAD-L) surveillance system, targets misfolded endoplasmic reticulum lumenal glycoproteins for degradation. The protein is Protein OS-9 homolog (YOS1) of Gibberella zeae (strain ATCC MYA-4620 / CBS 123657 / FGSC 9075 / NRRL 31084 / PH-1) (Wheat head blight fungus).